Consider the following 231-residue polypeptide: 7-cyano-7-deazaguanine synthase (231 aa).

8–18 (FSGGQDSTTCL) is a binding site for ATP. Zn(2+) is bound by residues Cys-187, Cys-196, Cys-199, and Cys-202.

It belongs to the QueC family. Requires Zn(2+) as cofactor.

It carries out the reaction 7-carboxy-7-deazaguanine + NH4(+) + ATP = 7-cyano-7-deazaguanine + ADP + phosphate + H2O + H(+). Its pathway is purine metabolism; 7-cyano-7-deazaguanine biosynthesis. Catalyzes the ATP-dependent conversion of 7-carboxy-7-deazaguanine (CDG) to 7-cyano-7-deazaguanine (preQ(0)). The protein is 7-cyano-7-deazaguanine synthase of Vibrio vulnificus (strain CMCP6).